Consider the following 506-residue polypeptide: H/ACA ribonucleoprotein complex subunit DKC1 (506 aa).

Residues 1–26 (MADTESKKEKKRKSKKISDEEVGDIQ) are disordered. The Nucleophile role is filled by D120. One can recognise a PUA domain in the interval 291–366 (HKRIVMKDSA…VVAKIKRVIM (76 aa)). Disordered regions lie at residues 391-410 (GLLDKHGKPNNSTPSDWKEG) and 419-506 (VKKG…ADSD). Residues 421 to 434 (KGGEASAKRKRDES) are compositionally biased toward basic and acidic residues. Residues 457-466 (EKKKKKKEKK) are compositionally biased toward basic residues.

The protein belongs to the pseudouridine synthase TruB family. In terms of assembly, part of the H/ACA small nucleolar ribonucleoprotein (H/ACA snoRNP) complex. The complex binds a box H/ACA small nucleolar RNA (snoRNA), which may target the specific site of modification within the RNA substrate.

The protein resides in the nucleus. It localises to the nucleolus. It is found in the cajal body. The enzyme catalyses uridine in 5S rRNA = pseudouridine in 5S rRNA. In terms of biological role, catalytic subunit of H/ACA small nucleolar ribonucleoprotein (H/ACA snoRNP) complex, which catalyzes pseudouridylation of rRNA. This involves the isomerization of uridine such that the ribose is subsequently attached to C5, instead of the normal N1. Pseudouridine ('psi') residues may serve to stabilize the conformation of rRNAs. Required for ribosome biogenesis and telomere maintenance. In Danio rerio (Zebrafish), this protein is H/ACA ribonucleoprotein complex subunit DKC1.